The following is a 363-amino-acid chain: Adenosine kinase (363 aa).

The Mg(2+) site is built by Ala-185, Ile-188, and Ala-191. The active site involves Asp-318.

It belongs to the carbohydrate kinase PfkB family. Mg(2+) is required as a cofactor.

It catalyses the reaction adenosine + ATP = AMP + ADP + H(+). It participates in purine metabolism; AMP biosynthesis via salvage pathway; AMP from adenosine: step 1/1. Functionally, ATP-dependent phosphorylation of adenosine and other related nucleoside analogs to monophosphate derivatives. It is a key purine metabolic enzyme in the opportunistic parasitic protozoan toxoplasma gondii as it cannot synthesize purines de novo. This Toxoplasma gondii protein is Adenosine kinase (AK).